The following is a 312-amino-acid chain: Olfactory receptor 1D5 (312 aa).

Residues 1–25 lie on the Extracellular side of the membrane; the sequence is MDGDNQSENSQFLLLGISESPEQQQ. N-linked (GlcNAc...) asparagine glycosylation occurs at Asn5. A helical transmembrane segment spans residues 26–49; sequence ILFWMFLSMYLVTVLGNVLIILAI. Over 50-57 the chain is Cytoplasmic; sequence SSDSHLHT. A helical membrane pass occupies residues 58-79; sequence PMYFFLANLSFTDLFFVTNTIP. Over 80 to 100 the chain is Extracellular; it reads KMLVNFQSQNKAISYAGCLTQ. Cys97 and Cys189 are disulfide-bonded. Residues 101–120 traverse the membrane as a helical segment; sequence LYFLVSLVTLDNLILAVMAY. At 121-140 the chain is on the cytoplasmic side; it reads DRYVAICCPLHYVTAMSPGL. A helical membrane pass occupies residues 141–158; the sequence is CVLLLSLCWGLSVLYGLL. The Extracellular portion of the chain corresponds to 159-196; that stretch reads LTLLLTRVTFCGPREIHYLFCDMYILLRLACSNTHIIH. Residues 197–220 traverse the membrane as a helical segment; that stretch reads TVLVATGCFIFLTPLGFMTTSYVC. At 221–237 the chain is on the cytoplasmic side; the sequence is IVRTILQIPSASKKYKA. A helical transmembrane segment spans residues 238–260; sequence FSTCASHLGVVSLFYGTLAMVYL. Residues 261–271 are Extracellular-facing; it reads QPLHTYSMKDS. The helical transmembrane segment at 272 to 291 threads the bilayer; sequence VATVMYAVVTPMMNPFIYSL. The Cytoplasmic segment spans residues 292–312; the sequence is RNKDMHGALGRVLRRLFQRPK.

Belongs to the G-protein coupled receptor 1 family.

The protein resides in the cell membrane. Functionally, odorant receptor. This is Olfactory receptor 1D5 (OR1D5) from Pan paniscus (Pygmy chimpanzee).